We begin with the raw amino-acid sequence, 117 residues long: Large ribosomal subunit protein uL18 (117 aa).

This sequence belongs to the universal ribosomal protein uL18 family. Part of the 50S ribosomal subunit; part of the 5S rRNA/L5/L18/L25 subcomplex. Contacts the 5S and 23S rRNAs.

Functionally, this is one of the proteins that bind and probably mediate the attachment of the 5S RNA into the large ribosomal subunit, where it forms part of the central protuberance. The chain is Large ribosomal subunit protein uL18 from Mycoplasma mobile (strain ATCC 43663 / 163K / NCTC 11711) (Mesomycoplasma mobile).